The chain runs to 486 residues: UDP-N-acetylmuramate--L-alanine ligase (486 aa).

123–129 serves as a coordination point for ATP; that stretch reads GTHGKTT.

Belongs to the MurCDEF family.

It localises to the cytoplasm. The catalysed reaction is UDP-N-acetyl-alpha-D-muramate + L-alanine + ATP = UDP-N-acetyl-alpha-D-muramoyl-L-alanine + ADP + phosphate + H(+). It participates in cell wall biogenesis; peptidoglycan biosynthesis. In terms of biological role, cell wall formation. The chain is UDP-N-acetylmuramate--L-alanine ligase from Pseudomonas fluorescens (strain Pf0-1).